The following is a 752-amino-acid chain: Peptidyl-prolyl cis-trans isomerase G (752 aa).

The PPIase cyclophilin-type domain maps to Phe11 to Glu176. The span at Lys182–Ser193 shows a compositional bias: basic residues. The tract at residues Lys182 to Gly752 is disordered. The span at Ser194 to Ser214 shows a compositional bias: low complexity. The span at Arg226 to Lys251 shows a compositional bias: basic residues. Phosphoserine occurs at positions 252, 254, 255, 257, and 288. Over residues Pro290 to Cys308 the composition is skewed to basic and acidic residues. Ser313 carries the phosphoserine modification. Residues Phe327 to Ser345 are compositionally biased toward basic residues. Basic and acidic residues-rich tracts occupy residues Arg346–Arg366 and Arg377–Asn447. Ser354 is subject to Phosphoserine. Thr356 is subject to Phosphothreonine. Ser384 bears the Phosphoserine mark. Lys390 participates in a covalent cross-link: Glycyl lysine isopeptide (Lys-Gly) (interchain with G-Cter in SUMO2). A phosphoserine mark is found at Ser395, Ser411, and Ser413. The segment covering Lys448 to Ser461 has biased composition (basic residues). 2 stretches are compositionally biased toward basic and acidic residues: residues Lys462–Lys552 and Arg577–Arg598. Residues Arg599–Asp625 are compositionally biased toward basic residues. A compositionally biased stretch (basic and acidic residues) spans Ser626 to Ile682. Phosphoserine occurs at positions 685 and 688. The segment covering Ser685–Lys705 has biased composition (polar residues). Lys691 is covalently cross-linked (Glycyl lysine isopeptide (Lys-Gly) (interchain with G-Cter in SUMO2)). Ser694, Ser742, and Ser743 each carry phosphoserine. Over residues Asn706–Gly752 the composition is skewed to basic and acidic residues. Residue Thr746 is modified to Phosphothreonine. Ser751 carries the post-translational modification Phosphoserine.

Interacts with CLK1, PNN and with the phosphorylated C-terminal domain of RNA polymerase II.

The protein localises to the nucleus matrix. It localises to the nucleus speckle. The catalysed reaction is [protein]-peptidylproline (omega=180) = [protein]-peptidylproline (omega=0). Its activity is regulated as follows. Inhibited by cyclosporin A (CsA). Functionally, PPIase that catalyzes the cis-trans isomerization of proline imidic peptide bonds in oligopeptides and may therefore assist protein folding. May be implicated in the folding, transport, and assembly of proteins. May play an important role in the regulation of pre-mRNA splicing. The protein is Peptidyl-prolyl cis-trans isomerase G (Ppig) of Rattus norvegicus (Rat).